The chain runs to 299 residues: tRNA dimethylallyltransferase (299 aa).

13-20 contributes to the ATP binding site; it reads GPTASGKT. 15–20 provides a ligand contact to substrate; sequence TASGKT. Residues 38–41 form an interaction with substrate tRNA region; it reads DSRQ.

The protein belongs to the IPP transferase family. As to quaternary structure, monomer. It depends on Mg(2+) as a cofactor.

The catalysed reaction is adenosine(37) in tRNA + dimethylallyl diphosphate = N(6)-dimethylallyladenosine(37) in tRNA + diphosphate. Catalyzes the transfer of a dimethylallyl group onto the adenine at position 37 in tRNAs that read codons beginning with uridine, leading to the formation of N6-(dimethylallyl)adenosine (i(6)A). This is tRNA dimethylallyltransferase from Prochlorococcus marinus (strain NATL2A).